The following is a 305-amino-acid chain: RxLR effector protein PexRD25 (305 aa).

The signal sequence occupies residues 1–16; the sequence is MRFLFYMLLACSAVVA. The RxLR-dEER signature appears at 44-56; it reads RLLRDRRSVDEER.

It belongs to the RxLR effector family.

The protein localises to the secreted. It localises to the host nucleus. It is found in the host nucleolus. In terms of biological role, effector that enhances P.infestans colonization of Nicotiana benthamiana leaves. In Phytophthora infestans (strain T30-4) (Potato late blight agent), this protein is RxLR effector protein PexRD25.